We begin with the raw amino-acid sequence, 234 residues long: Purine nucleoside phosphorylase DeoD-type (234 aa).

A purine D-ribonucleoside is bound at residue His4. Residues Gly20, Arg24, Arg43, and 87-90 each bind phosphate; that span reads RVGT. Residues 179–181 and 203–204 each bind a purine D-ribonucleoside; these read EME and SN.

The protein belongs to the PNP/UDP phosphorylase family. As to quaternary structure, homohexamer; trimer of homodimers.

It carries out the reaction a purine D-ribonucleoside + phosphate = a purine nucleobase + alpha-D-ribose 1-phosphate. The enzyme catalyses a purine 2'-deoxy-D-ribonucleoside + phosphate = a purine nucleobase + 2-deoxy-alpha-D-ribose 1-phosphate. Catalyzes the reversible phosphorolytic breakdown of the N-glycosidic bond in the beta-(deoxy)ribonucleoside molecules, with the formation of the corresponding free purine bases and pentose-1-phosphate. In Latilactobacillus sakei subsp. sakei (strain 23K) (Lactobacillus sakei subsp. sakei), this protein is Purine nucleoside phosphorylase DeoD-type.